The following is a 147-amino-acid chain: uncharacterized protein (147 aa).

A helical membrane pass occupies residues 3-23; sequence APMIGMVVLVVVLGLAVLALS.

To M.leprae ML1147.

It localises to the membrane. This is an uncharacterized protein from Mycobacterium tuberculosis (strain CDC 1551 / Oshkosh).